A 500-amino-acid chain; its full sequence is Glucokinase-1 (500 aa).

An N-acetylserine modification is found at serine 2. Serine 2 is subject to Phosphoserine. The region spanning 12–498 (RAVIQAVDQI…SGVGAALCAL (487 aa)) is the Hexokinase domain. The interval 74–216 (NGTERGVLLA…MPMIKVVALT (143 aa)) is hexokinase small subdomain. Lysine 110 contributes to the ATP binding site. The glucose-binding stretch occupies residues 158–184 (KLGFTFSYPVDQTSLNSGTLIRWTKGF). The segment at 217–487 (NDTVGTYLSH…RKVHLKIAKD (271 aa)) is hexokinase large subdomain. At serine 470 the chain carries Phosphoserine. 487-492 (DGSGVG) provides a ligand contact to ATP.

It belongs to the hexokinase family. Monomer.

It catalyses the reaction D-glucose + ATP = D-glucose 6-phosphate + ADP + H(+). It participates in carbohydrate metabolism; hexose metabolism. The protein operates within carbohydrate degradation; glycolysis; D-glyceraldehyde 3-phosphate and glycerone phosphate from D-glucose: step 1/4. In terms of biological role, two isoenzymes, hexokinase-1 and hexokinase-2, can phosphorylate keto- and aldohexoses in yeast, whereas a third isoenzyme, GLK, is specific for aldohexoses. All glucose phosphorylating enzymes are involved in glucose uptake. This Saccharomyces cerevisiae (strain ATCC 204508 / S288c) (Baker's yeast) protein is Glucokinase-1 (GLK1).